Reading from the N-terminus, the 236-residue chain is Protein Thf1 (236 aa).

Residues 180–220 (PVEKMQKDLEQYRSNLEKMTQARKTLEDIVAAERKRRQQNA) are a coiled coil. The interval 206 to 236 (EDIVAAERKRRQQNAAPDRSPESASATEAPN) is disordered. Positions 227–236 (ESASATEAPN) are enriched in polar residues.

Belongs to the THF1 family.

In terms of biological role, may be involved in photosynthetic membrane biogenesis. The protein is Protein Thf1 of Cyanothece sp. (strain PCC 7425 / ATCC 29141).